Consider the following 801-residue polypeptide: Zinc finger Y-chromosomal protein (801 aa).

A Phosphoserine modification is found at Ser270. Residues 421–443 (YPCMICGKKFKSRGFLKRHMKNH) form a C2H2-type 1 zinc finger. The segment at 452–474 (YHCTDCDYTTNKKISLHNHLESH) adopts a C2H2-type 2; atypical zinc-finger fold. C2H2-type zinc fingers lie at residues 484-506 (IECDECGKHFSHAGALFTHKMVH), 515-538 (HKCKFCEYETAEQGLLNRHLLAVH), 544-566 (HICVECGKGFRHPSELRKHMRIH), 572-595 (YQCQYCEYRSADSSNLKTHIKTKH), 601-623 (FKCDICLLTFSDTKEVQQHTLVH), 629-652 (HQCLHCDHKSSNSSDLKRHVISVH), 658-680 (HKCEMCEKGFHRPSELKKHVAVH), 686-709 (HQCRHCDFKIADPFVLSRHILSVH), 715-737 (FRCKRCRKGFRQQNELKKHMKTH), 743-766 (YQCEYCEYSTTDASGFKRHVISIH), and 772-795 (HRCEYCKKGFRRPSEKNQHIMRHH).

This sequence belongs to the krueppel C2H2-type zinc-finger protein family. ZFX/ZFY subfamily.

It is found in the nucleus. Functionally, probable transcriptional activator. Binds to the consensus sequence 5'-AGGCCY-3'. The chain is Zinc finger Y-chromosomal protein (ZFY) from Homo sapiens (Human).